A 293-amino-acid polypeptide reads, in one-letter code: GPN-loop GTPase 3 (293 aa).

Residue 13–18 (GAGKST) participates in GTP binding. Residues 70-72 (GPN) carry the Gly-Pro-Asn (GPN)-loop; involved in dimer interface motif. 176–179 (SKMD) serves as a coordination point for GTP. The segment covering 272 to 281 (HEAQEPREPN) has biased composition (basic and acidic residues). The interval 272-293 (HEAQEPREPNDEQDVDYEDADI) is disordered. Positions 282–293 (DEQDVDYEDADI) are enriched in acidic residues.

This sequence belongs to the GPN-loop GTPase family. In terms of assembly, heterodimers with gpn1 or gpn2. Binds to RNA polymerase II (RNAPII).

Small GTPase required for proper nuclear import of RNA polymerase II and III (RNAPII and RNAPIII). May act at an RNAP assembly step prior to nuclear import. The sequence is that of GPN-loop GTPase 3 from Aspergillus fumigatus (strain ATCC MYA-4609 / CBS 101355 / FGSC A1100 / Af293) (Neosartorya fumigata).